Reading from the N-terminus, the 243-residue chain is Transcription factor TCP6 (243 aa).

The interval 1 to 55 (MVMEPKKNQNLPSFLNPSRQNQDNDKKRKQTEVKGFDIVVGEKRKKKENEEEDQE) is disordered. Positions 8–21 (NQNLPSFLNPSRQN) are enriched in polar residues. Over residues 22–35 (QDNDKKRKQTEVKG) the composition is skewed to basic and acidic residues. Positions 42 to 66 (EKRKKKENEEEDQEIQILYEKEKKK) form a coiled coil. Residues 68–122 (NKDRHLKVEGRGRRVRLPPLCAARIYQLTKELGHKSDGETLEWLLQHAEPSILSA) form the TCP domain.

As to quaternary structure, interacts with SPL.

It localises to the nucleus. The protein is Transcription factor TCP6 (TCP6) of Arabidopsis thaliana (Mouse-ear cress).